Consider the following 370-residue polypeptide: Biotin synthase (370 aa).

The 236-residue stretch at 79–314 (CCGNVVDLCS…KQIIRYAGGR (236 aa)) folds into the Radical SAM core domain. [4Fe-4S] cluster is bound by residues Cys97, Cys101, and Cys104. Residues Cys142, Cys179, Cys239, and Arg309 each coordinate [2Fe-2S] cluster.

It belongs to the radical SAM superfamily. Biotin synthase family. As to quaternary structure, homodimer. Requires [4Fe-4S] cluster as cofactor. It depends on [2Fe-2S] cluster as a cofactor.

It carries out the reaction (4R,5S)-dethiobiotin + (sulfur carrier)-SH + 2 reduced [2Fe-2S]-[ferredoxin] + 2 S-adenosyl-L-methionine = (sulfur carrier)-H + biotin + 2 5'-deoxyadenosine + 2 L-methionine + 2 oxidized [2Fe-2S]-[ferredoxin]. Its pathway is cofactor biosynthesis; biotin biosynthesis; biotin from 7,8-diaminononanoate: step 2/2. Its function is as follows. Catalyzes the conversion of dethiobiotin (DTB) to biotin by the insertion of a sulfur atom into dethiobiotin via a radical-based mechanism. This Trichodesmium erythraeum (strain IMS101) protein is Biotin synthase.